We begin with the raw amino-acid sequence, 432 residues long: UDP-glucosyltransferase B1 (432 aa).

It belongs to the UDP-glycosyltransferase family.

The catalysed reaction is (9Z)-17-hydroxyoctadec-9-enoate 17-O-beta-D-glucoside + UDP-alpha-D-glucose = (9Z)-17-hydroxyoctadec-9-enoate 17-O-sophoroside + UDP + H(+). In terms of biological role, catalyzes the second glycosylation step of sophorolipid biosynthesis, the further glucosylation of the previoulsy formed glucolipid to give rise to an acidic sophorolipid. The chain is UDP-glucosyltransferase B1 from Starmerella bombicola (Yeast).